Consider the following 294-residue polypeptide: ATP synthase gamma chain (294 aa).

This sequence belongs to the ATPase gamma chain family. In terms of assembly, F-type ATPases have 2 components, CF(1) - the catalytic core - and CF(0) - the membrane proton channel. CF(1) has five subunits: alpha(3), beta(3), gamma(1), delta(1), epsilon(1). CF(0) has three main subunits: a, b and c.

It localises to the cell inner membrane. Its function is as follows. Produces ATP from ADP in the presence of a proton gradient across the membrane. The gamma chain is believed to be important in regulating ATPase activity and the flow of protons through the CF(0) complex. The protein is ATP synthase gamma chain of Campylobacter jejuni subsp. jejuni serotype O:2 (strain ATCC 700819 / NCTC 11168).